We begin with the raw amino-acid sequence, 179 residues long: Acireductone dioxygenase (179 aa).

H88, H90, E94, and H133 together coordinate Fe(2+). Ni(2+) contacts are provided by H88, H90, E94, and H133.

It belongs to the acireductone dioxygenase (ARD) family. Monomer. Interacts with MMP14. Fe(2+) serves as cofactor. Requires Ni(2+) as cofactor.

It is found in the cytoplasm. The protein localises to the nucleus. It localises to the cell membrane. The catalysed reaction is 1,2-dihydroxy-5-(methylsulfanyl)pent-1-en-3-one + O2 = 4-methylsulfanyl-2-oxobutanoate + formate + 2 H(+). It carries out the reaction 1,2-dihydroxy-5-(methylsulfanyl)pent-1-en-3-one + O2 = 3-(methylsulfanyl)propanoate + CO + formate + 2 H(+). It functions in the pathway amino-acid biosynthesis; L-methionine biosynthesis via salvage pathway; L-methionine from S-methyl-5-thio-alpha-D-ribose 1-phosphate: step 5/6. Its function is as follows. Catalyzes 2 different reactions between oxygen and the acireductone 1,2-dihydroxy-3-keto-5-methylthiopentene (DHK-MTPene) depending upon the metal bound in the active site. Fe-containing acireductone dioxygenase (Fe-ARD) produces formate and 2-keto-4-methylthiobutyrate (KMTB), the alpha-ketoacid precursor of methionine in the methionine recycle pathway. Ni-containing acireductone dioxygenase (Ni-ARD) produces methylthiopropionate, carbon monoxide and formate, and does not lie on the methionine recycle pathway. This chain is Acireductone dioxygenase (adi1), found in Xenopus laevis (African clawed frog).